The sequence spans 405 residues: FK506-binding protein 4 (405 aa).

Disordered regions lie at residues 49-117 (THNP…EDEL) and 164-297 (QQDE…PQKK). Composition is skewed to acidic residues over residues 59 to 84 (ESDD…EMEV), 98 to 117 (VEEE…EDEL), and 165 to 201 (QDED…EEEA). 2 stretches are compositionally biased toward basic and acidic residues: residues 238-252 (RKAE…EDAA) and 265-276 (AKVEGEKAEEKP). One can recognise a PPIase FKBP-type domain in the interval 319–405 (GKRLGMRYIG…KFDVKLVSIN (87 aa)).

The protein belongs to the FKBP-type PPIase family. FKBP3/4 subfamily. In terms of assembly, binds to histones H3 and H4.

It is found in the nucleus. The catalysed reaction is [protein]-peptidylproline (omega=180) = [protein]-peptidylproline (omega=0). Inhibited by both FK506 and rapamycin. Its function is as follows. PPIase that acts as a histone chaperone. Histone proline isomerase that increases the rate of cis-trans isomerization at prolines on the histone H3 N-terminal tail. Proline isomerization influences H3 methylation thereby regulating gene expression. This is FK506-binding protein 4 (FPR4) from Cryptococcus neoformans var. neoformans serotype D (strain B-3501A) (Filobasidiella neoformans).